Reading from the N-terminus, the 220-residue chain is UPF0758 protein CKO_05095 (220 aa).

The 123-residue stretch at 98–220 (ALLSPEMTRE…YVSFAERGWI (123 aa)) folds into the MPN domain. Zn(2+) is bound by residues H169, H171, and D182. Residues 169–182 (HNHPSGCAEPSKAD) carry the JAMM motif motif.

It belongs to the UPF0758 family. YicR subfamily.

This is UPF0758 protein CKO_05095 from Citrobacter koseri (strain ATCC BAA-895 / CDC 4225-83 / SGSC4696).